We begin with the raw amino-acid sequence, 284 residues long: MGVESVRCPLHFTKMQGAGNDFVVLDLRDGTPPPDVALVAWLADRHFGIGCDQVIAIEPPRGVGVFAAYRIWNADGSAAQQCGNGARCVAAWLVRDGSVADEHFLIDSPVQAHLVRCIGKDEYAVEMGLPVFEPERIPLSGFPNACGEYVLSLQGEVLRCGAVSMGNPHAVVEVDLIDVAPVERIGSLLQQHVAFPESVNVGFVQVIDPGLVRLRVYERGAGETLACGSGACAAAVVLMQRGRVGRDVRVVLPGGTLRVQWPVSGGPVTLSGPAKCVFDGVWYG.

Asn20, Gln53, and Asn73 together coordinate substrate. The active-site Proton donor is Cys82. Substrate is bound by residues 83-84 (GN), Asn167, Asn200, and 218-219 (ER). Cys227 serves as the catalytic Proton acceptor. 228–229 (GS) lines the substrate pocket.

This sequence belongs to the diaminopimelate epimerase family. In terms of assembly, homodimer.

It is found in the cytoplasm. It catalyses the reaction (2S,6S)-2,6-diaminopimelate = meso-2,6-diaminopimelate. Its pathway is amino-acid biosynthesis; L-lysine biosynthesis via DAP pathway; DL-2,6-diaminopimelate from LL-2,6-diaminopimelate: step 1/1. In terms of biological role, catalyzes the stereoinversion of LL-2,6-diaminopimelate (L,L-DAP) to meso-diaminopimelate (meso-DAP), a precursor of L-lysine and an essential component of the bacterial peptidoglycan. This Xylella fastidiosa (strain 9a5c) protein is Diaminopimelate epimerase.